Consider the following 401-residue polypeptide: Tyrosine--tRNA ligase (401 aa).

The 'HIGH' region signature appears at 41–50 (PSRPDLHLGH). The 'KMSKS' region signature appears at 225–229 (KMSKS). K228 contacts ATP. In terms of domain architecture, S4 RNA-binding spans 334 to 395 (KNIVDLLVEI…GKRKFYRISG (62 aa)).

It belongs to the class-I aminoacyl-tRNA synthetase family. TyrS type 2 subfamily. In terms of assembly, homodimer.

It localises to the cytoplasm. The catalysed reaction is tRNA(Tyr) + L-tyrosine + ATP = L-tyrosyl-tRNA(Tyr) + AMP + diphosphate + H(+). Catalyzes the attachment of tyrosine to tRNA(Tyr) in a two-step reaction: tyrosine is first activated by ATP to form Tyr-AMP and then transferred to the acceptor end of tRNA(Tyr). This is Tyrosine--tRNA ligase from Thermotoga maritima (strain ATCC 43589 / DSM 3109 / JCM 10099 / NBRC 100826 / MSB8).